The following is a 693-amino-acid chain: Serine/threonine-protein kinase Pkn1 (693 aa).

The Protein kinase domain occupies 59-328 (FRLVRRLGRG…QVALAEHVRV (270 aa)). Residues 65 to 73 (LGRGGMGAV) and lysine 88 each bind ATP. Aspartate 180 serves as the catalytic Proton acceptor. A PilZ domain is found at 393–491 (LVEVPVQVVL…LKAAVDALLQ (99 aa)). The stretch at 630–663 (ARSHFQSGGALERDGQLSQALDQYERGLKLAPLE) is one TPR repeat.

The protein belongs to the protein kinase superfamily. Ser/Thr protein kinase family. In terms of processing, autophosphorylated.

It catalyses the reaction L-seryl-[protein] + ATP = O-phospho-L-seryl-[protein] + ADP + H(+). The enzyme catalyses L-threonyl-[protein] + ATP = O-phospho-L-threonyl-[protein] + ADP + H(+). With respect to regulation, may be regulated by calcium or a calmodulin-like protein. In terms of biological role, plays an essential role in proper timing of early development events. The chain is Serine/threonine-protein kinase Pkn1 (pkn1) from Myxococcus xanthus.